A 39-amino-acid polypeptide reads, in one-letter code: Conotoxin ArMSGL-013 (39 aa).

Residues 1–5 constitute a propeptide that is removed on maturation; the sequence is RRSLT. Disulfide bonds link Cys12–Cys24, Cys16–Cys33, and Cys23–Cys37. Residue Trp38 is modified to Tryptophan amide.

The protein belongs to the conotoxin O3 superfamily. As to expression, expressed by the venom duct.

Its subcellular location is the secreted. The protein is Conotoxin ArMSGL-013 of Conus arenatus (Sand-dusted cone).